The following is a 534-amino-acid chain: Protein tweety homolog 2 (534 aa).

At 1–44 (MATARVEYIAPWWVYWLHNLPHVDFSLQRESGDFNPKDPGYQQT) the chain is on the extracellular side. Residues 45–65 (LLFVALFIALCAAVNLLFVSG) form a helical membrane-spanning segment. At 66-87 (YLICLCCCKKEDETETKMTSSC) the chain is on the cytoplasmic side. A helical transmembrane segment spans residues 88 to 108 (CVTWTAAVSGLLCCAAVGIGF). Residues 109–213 (YGNSETNDGV…NASIIEYYRW (105 aa)) lie on the Extracellular side of the membrane. Ca(2+) is bound by residues glutamate 113 and aspartate 116. The N-linked (GlcNAc...) asparagine glycan is linked to asparagine 129. Residues 164–166 (RGD) carry the RGD motif. N-linked (GlcNAc...) asparagine glycosylation is found at asparagine 197 and asparagine 204. A helical transmembrane segment spans residues 214–234 (LSYLILFITDVVICLVTCLGL). The Cytoplasmic segment spans residues 235 to 240 (AKKSKC). The chain crosses the membrane as a helical span at residues 241-261 (LLLTMLCCGLIALMLSWASLA). The Extracellular portion of the chain corresponds to 262 to 388 (LETSSAVGTS…IGICYDGVEG (127 aa)). Cystine bridges form between cysteine 274–cysteine 382 and cysteine 300–cysteine 367. A glycan (N-linked (GlcNAc...) asparagine) is linked at asparagine 352. The helical transmembrane segment at 389 to 409 (LLYLSLFSLLAAVAFTAMVCA) threads the bilayer. The Cytoplasmic portion of the chain corresponds to 410 to 534 (MPRAWKHLAA…PNIYSNVFPA (125 aa)).

The protein belongs to the tweety family. Forms cis-homodimers in the presence of Ca(+2) and forms monomers and trans-dimers in the absence of Ca(2+).

It is found in the cell membrane. The catalysed reaction is chloride(in) = chloride(out). The enzyme catalyses L-glutamate(out) = L-glutamate(in). May act as a calcium-independent, swelling-dependent volume-regulated anion channel (VRAC-swell) which plays a pivotal role in the process of regulatory volume decrease (RVD) in the brain through the efflux of anions like chloride and organic osmolytes like glutamate. Probable large-conductance Ca(2+)-activated chloride channel. The polypeptide is Protein tweety homolog 2 (ttyh2) (Xenopus laevis (African clawed frog)).